The primary structure comprises 214 residues: Protein OPG034 (214 aa).

It belongs to the orthopoxvirus OPG034 family.

This is Protein OPG034 (OPG034) from Monkeypox virus.